The sequence spans 339 residues: 5-dehydro-2-deoxygluconokinase (339 aa).

Belongs to the carbohydrate kinase PfkB family.

The enzyme catalyses 5-dehydro-2-deoxy-D-gluconate + ATP = 6-phospho-5-dehydro-2-deoxy-D-gluconate + ADP + H(+). It functions in the pathway polyol metabolism; myo-inositol degradation into acetyl-CoA; acetyl-CoA from myo-inositol: step 5/7. Functionally, catalyzes the phosphorylation of 5-dehydro-2-deoxy-D-gluconate (2-deoxy-5-keto-D-gluconate or DKG) to 6-phospho-5-dehydro-2-deoxy-D-gluconate (DKGP). The sequence is that of 5-dehydro-2-deoxygluconokinase from Clostridium beijerinckii (strain ATCC 51743 / NCIMB 8052) (Clostridium acetobutylicum).